Here is a 380-residue protein sequence, read N- to C-terminus: Cytochrome b (380 aa).

Helical transmembrane passes span 34-54, 78-99, 114-134, and 179-199; these read FGSL…LLAA, WLIR…YLHI, WNTG…GYVL, and FFTL…IHLT. Residues His-84 and His-98 each contribute to the heme b site. His-183 and His-197 together coordinate heme b. His-202 is an a ubiquinone binding site. Helical transmembrane passes span 227 to 247, 289 to 309, 321 to 341, and 348 to 368; these read LKDI…ALFS, LGGV…PLLH, FSQL…WVGS, and FIII…ILFP.

It belongs to the cytochrome b family. In terms of assembly, the cytochrome bc1 complex contains 11 subunits: 3 respiratory subunits (MT-CYB, CYC1 and UQCRFS1), 2 core proteins (UQCRC1 and UQCRC2) and 6 low-molecular weight proteins (UQCRH/QCR6, UQCRB/QCR7, UQCRQ/QCR8, UQCR10/QCR9, UQCR11/QCR10 and a cleavage product of UQCRFS1). This cytochrome bc1 complex then forms a dimer. Requires heme b as cofactor.

The protein resides in the mitochondrion inner membrane. Component of the ubiquinol-cytochrome c reductase complex (complex III or cytochrome b-c1 complex) that is part of the mitochondrial respiratory chain. The b-c1 complex mediates electron transfer from ubiquinol to cytochrome c. Contributes to the generation of a proton gradient across the mitochondrial membrane that is then used for ATP synthesis. This chain is Cytochrome b (MT-CYB), found in Antigone antigone (Sarus crane).